A 1210-amino-acid chain; its full sequence is AF4/FMR2 family member 1 (1210 aa).

4 disordered regions span residues 1-45 (MAAQ…GEPY), 73-314 (TKSH…KPLP), 366-957 (SWPP…KPQV), and 1098-1119 (TGTP…SQSS). Basic and acidic residues-rich tracts occupy residues 9–35 (NDDR…EAFP) and 78–87 (HRLDASENRL). Ser199, Ser206, and Ser212 each carry phosphoserine. Residues 215 to 238 (HSNQQTLPRTQGSSKVHGSSNNSK) are compositionally biased toward polar residues. A Phosphothreonine modification is found at Thr220. Over residues 245–259 (SPKDLAVKVHDKETP) the composition is skewed to basic and acidic residues. The segment covering 267-279 (AQPPSQTFPPPSL) has biased composition (pro residues). Residues 394–419 (HVSSVTQNQKQYDTSSKTHSNSQQGT) are compositionally biased toward polar residues. Residues 423–439 (LEDDLQLSDSEDSDSEQ) show a composition bias toward acidic residues. Positions 442-453 (EKPPSSSAPPSA) are enriched in pro residues. Positions 454-472 (PQSLPEPVASAHSSSAESE) are enriched in low complexity. The segment covering 473-497 (STSDSDSSSDSESESSSSDSEENEP) has biased composition (acidic residues). The span at 536–546 (EPPRRHPESKG) shows a compositional bias: basic and acidic residues. The span at 586–602 (QKSPAQQEPPQRQTVGT) shows a compositional bias: polar residues. Phosphoserine is present on Ser588. Lys681 is modified (N6-acetyllysine). The span at 688-699 (PAKDNVEDRTPE) shows a compositional bias: basic and acidic residues. Position 697 is a phosphothreonine (Thr697). The segment covering 707–724 (TESQGPPHSGSGSRTSGC) has biased composition (polar residues). Positions 732-747 (EDSRKDRLPLPLRDTK) are enriched in basic and acidic residues. The residue at position 750 (Ser750) is a Phosphoserine. At Thr755 the chain carries Phosphothreonine. The segment covering 816-834 (GEAERDCDNKKIRLEKEIK) has biased composition (basic and acidic residues). Residues 871 to 880 (SSSSQKPAKP) show a composition bias toward low complexity. A compositionally biased stretch (basic and acidic residues) spans 906–932 (NHKDSSIPKQRRVEGKGSRSSSEHKGS). Residues 1110–1119 (PASSVGSQSS) show a composition bias toward low complexity.

Belongs to the AF4 family. In terms of assembly, component of the super elongation complex (SEC), at least composed of EAF1, EAF2, CDK9, MLLT3/AF9, AFF (AFF1 or AFF4), the P-TEFb complex and ELL (ELL, ELL2 or ELL3).

Its subcellular location is the nucleus. The polypeptide is AF4/FMR2 family member 1 (AFF1) (Homo sapiens (Human)).